A 160-amino-acid chain; its full sequence is Afimbrial adhesin AFA-III (160 aa).

The signal sequence occupies residues 1-21 (MKKLAIMAAASMVFAVSSAHA). The tract at residues 22–75 (GFTPSGTTGTTKLTVTEECQVRVGDLTVAKTRGQLTDAAPIGPVTVQALGCNAR) is receptor-binding.

It belongs to the Dr-adhesin family.

The protein resides in the fimbrium. Functionally, hemagglutinins of uropathogenic E.coli mediate adherence to the upper urinary tract. These adhesins bind to the Dr blood group antigen and also agglutinate human erythrocytes in the presence of D-mannose (mannose-resistant hemagglutination (MRHA)). The sequence is that of Afimbrial adhesin AFA-III (afaE3) from Escherichia coli.